The chain runs to 467 residues: Mitogen-activated protein kinase kinase kinase 8 (467 aa).

Residue Thr-80 is modified to Phosphothreonine. Ser-138 and Ser-141 each carry phosphoserine. Residues 144 to 152 (VPRGAFGKV) and Lys-167 each bind ATP. Residues 146–388 (RGAFGKVYLA…AADLLKHEAL (243 aa)) enclose the Protein kinase domain. The Proton acceptor role is filled by Asp-253. A Phosphothreonine modification is found at Thr-290. Phosphoserine occurs at positions 400 and 443.

The protein belongs to the protein kinase superfamily. STE Ser/Thr protein kinase family. MAP kinase kinase kinase subfamily. In terms of assembly, forms a ternary complex with NFKB1/p105 and TNIP2. Interacts with NFKB1; the interaction increases the stability of MAP3K8 but inhibits its MEK phosphorylation activity, whereas loss of interaction following LPS stimulation leads to its degradation. Interacts with CD40 and TRAF6; the interaction is required for ERK activation. Interacts with KSR2; the interaction inhibits ERK and NF-kappa-B activation. The cofactor is Mg(2+). Post-translationally, autophosphorylated. As to expression, expressed in spleen, thymus, liver and lung.

The protein localises to the cytoplasm. It catalyses the reaction L-seryl-[protein] + ATP = O-phospho-L-seryl-[protein] + ADP + H(+). The enzyme catalyses L-threonyl-[protein] + ATP = O-phospho-L-threonyl-[protein] + ADP + H(+). Functionally, required for lipopolysaccharide (LPS)-induced, TLR4-mediated activation of the MAPK/ERK pathway in macrophages, thus being critical for production of the pro-inflammatory cytokine TNF-alpha (TNF) during immune responses. Involved in the regulation of T-helper cell differentiation and IFNG expression in T-cells. Involved in mediating host resistance to bacterial infection through negative regulation of type I interferon (IFN) production. Transduces CD40 and TNFRSF1A signals that activate ERK in B-cells and macrophages, and thus may play a role in the regulation of immunoglobulin production. May also play a role in the transduction of TNF signals that activate JNK and NF-kappa-B in some cell types. In adipocytes, activates MAPK/ERK pathway in an IKBKB-dependent manner in response to IL1B and TNF, but not insulin, leading to induction of lipolysis. Plays a role in the cell cycle. The polypeptide is Mitogen-activated protein kinase kinase kinase 8 (Map3k8) (Rattus norvegicus (Rat)).